The following is a 164-amino-acid chain: Large ribosomal subunit protein uL15 (164 aa).

2 disordered regions span residues 1–49 (MTKL…SIAG) and 143–164 (EKAGGKLTTTKPEAAQDASAEA). Residues 22–36 (RGPGSGKGKTAGRGV) show a composition bias toward gly residues.

The protein belongs to the universal ribosomal protein uL15 family. In terms of assembly, part of the 50S ribosomal subunit.

In terms of biological role, binds to the 23S rRNA. The sequence is that of Large ribosomal subunit protein uL15 from Phenylobacterium zucineum (strain HLK1).